Reading from the N-terminus, the 652-residue chain is MKKEQYIKAVELLNLYSYHYYVLDDAITTDEVYDKLYHEVLEYEESHKEDILKNSPTQRVGDTVSEGFSKAPHLSRMWSLEDVFDSDGLQKWLIKTYKLDSNISFYCEPKYDGASLNLIYENGELSQAITRGDGEVGELITQNVKTIRSVPLSIEHKEKIEIRGEVVIFKDEFEKINQTRLKDGEALFANPRNAAAGSLRQLDSSITASRNLVFLPYGVGENFLEHKLLSQKMEYIYSLGFKKPPFCATCKDFNEIEAVYQEMSRNRDSYPMMLDGMVVKVDEIAAQIDMGYTVKNPRFSVAYKFPAVEKITTIKEIILQVGRTGAVTPVAIVEPTNIDGVVVERATLHNFDEIQRKDIRINDHVIILRSGDVIPKIIKVLTHERDGSEVEYKRPTICPVCESELLDEGVLLKCQNLTCEARVINSIIYFASKPCLNIDGLGVKIVEALFNSGLVKSVVDLFDLTLEKLLTLEGFKEKKAQNLLDALGSAKGCEYWRFVNSLGIEHIGEVASKTLSAKFGSGFIDATKDEIVACDGVGEEMAESLLEFIRVNRETILKLQNILKPLEPLQRQEAKENPFKGKSVVLTGSMSESRDMIKEMLESLGAKVVSSVSKKTDFVIYGEDAGSKYDKAMDLGVECLNEDEMRSKIEQA.

NAD(+) is bound by residues 30–34 (DEVYD), 79–80 (SL), and Glu108. The active-site N6-AMP-lysine intermediate is the Lys110. 4 residues coordinate NAD(+): Arg131, Glu165, Lys280, and Lys304. Residues Cys398, Cys401, Cys414, and Cys419 each contribute to the Zn(2+) site. Positions 574-652 (AKENPFKGKS…DEMRSKIEQA (79 aa)) constitute a BRCT domain.

Belongs to the NAD-dependent DNA ligase family. LigA subfamily. Mg(2+) is required as a cofactor. It depends on Mn(2+) as a cofactor.

It carries out the reaction NAD(+) + (deoxyribonucleotide)n-3'-hydroxyl + 5'-phospho-(deoxyribonucleotide)m = (deoxyribonucleotide)n+m + AMP + beta-nicotinamide D-nucleotide.. Its function is as follows. DNA ligase that catalyzes the formation of phosphodiester linkages between 5'-phosphoryl and 3'-hydroxyl groups in double-stranded DNA using NAD as a coenzyme and as the energy source for the reaction. It is essential for DNA replication and repair of damaged DNA. The protein is DNA ligase of Sulfurimonas denitrificans (strain ATCC 33889 / DSM 1251) (Thiomicrospira denitrificans (strain ATCC 33889 / DSM 1251)).